The following is a 563-amino-acid chain: Pentatricopeptide repeat-containing protein At4g39620, chloroplastic (563 aa).

The transit peptide at 1–47 (MDYLLTSPSSLRFSDFISSIPKETDHKWLRFSVNLGDARRSTRTRIT) directs the protein to the chloroplast. PPR repeat units follow at residues 132-166 (DNGVYSKLISVMGKKGQTRMAMWLFSEMKNSGCRP), 167-197 (DASVYNALITAHLHTRDKAKALEKVRGYLDK), 207-241 (NVVTYNILLRAFAQSGKVDQVNALFKDLDMSPVSP), 242-276 (DVYTFNGVMDAYGKNGMIKEMEAVLTRMRSNECKP), 277-311 (DIITFNVLIDSYGKKQEFEKMEQTFKSLMRSKEKP), 312-346 (TLPTFNSMIINYGKARMIDKAEWVFKKMNDMNYIP), 347-381 (SFITYECMIMMYGYCGSVSRAREIFEEVGESDRVL), 382-416 (KASTLNAMLEVYCRNGLYIEADKLFHNASAFRVHP), and 417-451 (DASTYKFLYKAYTKADMKEQVQILMKKMEKDGIVP). 2 disordered regions span residues 468-501 (PGSGSENRKSTRSSRSRDSPKGRGGNQLTEFQDK) and 520-551 (NLSGHDKGSRDESRKPSQEKQPLFASDQNNMM). Positions 520–537 (NLSGHDKGSRDESRKPSQ) are enriched in basic and acidic residues.

This sequence belongs to the PPR family. P subfamily.

The protein localises to the plastid. It localises to the chloroplast. Functionally, essential for embryo development. The sequence is that of Pentatricopeptide repeat-containing protein At4g39620, chloroplastic from Arabidopsis thaliana (Mouse-ear cress).